A 205-amino-acid polypeptide reads, in one-letter code: MSEVSSVVNRIRRATIERVTGETNITLTLTIDGSGQADVQTGIGFLDHMLTLWARHGLFDLQVRAQGDLHIDEHHTAEDVCICLGRAIDQALGERAGIVRTAHSFVPMDEALALVAVDLGGRPYCVVQADFVTMRVGQLGTDLVAHLFESVAFNGRFNLHAQVMYGRNDHHKIEALFKAFGRALDAATRIDARLGGTIPSTKGVL.

Belongs to the imidazoleglycerol-phosphate dehydratase family.

It is found in the cytoplasm. The enzyme catalyses D-erythro-1-(imidazol-4-yl)glycerol 3-phosphate = 3-(imidazol-4-yl)-2-oxopropyl phosphate + H2O. The protein operates within amino-acid biosynthesis; L-histidine biosynthesis; L-histidine from 5-phospho-alpha-D-ribose 1-diphosphate: step 6/9. In Chloroflexus aurantiacus (strain ATCC 29366 / DSM 635 / J-10-fl), this protein is Imidazoleglycerol-phosphate dehydratase.